The sequence spans 415 residues: uncharacterized protein (415 aa).

[4Fe-4S] cluster-binding residues include cysteine 85, cysteine 91, cysteine 94, and cysteine 175. Residues glutamine 248, tyrosine 276, glutamate 297, and asparagine 344 each contribute to the S-adenosyl-L-methionine site. Cysteine 371 functions as the Nucleophile in the catalytic mechanism.

This sequence belongs to the class I-like SAM-binding methyltransferase superfamily. RNA M5U methyltransferase family.

This is an uncharacterized protein from Leptospira interrogans serogroup Icterohaemorrhagiae serovar Lai (strain 56601).